We begin with the raw amino-acid sequence, 311 residues long: MQPPGGDAPAGCPFSGARAAQPAQAAHEAPHVPGEADAQAGWHNAQLDFSKSMSYGDYLSLNSILDAQHPLSPDHNEMLFIIQHQTSELWMKLALFELRGALDAVRTDALPPAFKMLARVSRILEQLVQAWNVLSTMTPSEYSAMRPYLGQSSGFQSYQYRQLEFLLGNKNAQMLQPHAHRPDILEQVRATLEAPSFYDEVVRLLARRGFPIAPERLERDWTQPMRHDETVEAAWLEVYRHPQQHWELYEMAEELVDLEDAFRQWRFRHVTTVERIIGFKQGTGGTSGAPYLRKMLDVVLFPELWHVRTTL.

Positions 1–37 (MQPPGGDAPAGCPFSGARAAQPAQAAHEAPHVPGEAD) are disordered. Positions 17–27 (ARAAQPAQAAH) are enriched in low complexity. Substrate is bound by residues 80 to 84 (FIIQH), Tyr-142, and Arg-146. Position 269 (His-269) interacts with heme. Thr-283 is a binding site for substrate.

It belongs to the tryptophan 2,3-dioxygenase family. Homotetramer. It depends on heme as a cofactor.

The enzyme catalyses L-tryptophan + O2 = N-formyl-L-kynurenine. It participates in amino-acid degradation; L-tryptophan degradation via kynurenine pathway; L-kynurenine from L-tryptophan: step 1/2. Functionally, heme-dependent dioxygenase that catalyzes the oxidative cleavage of the L-tryptophan (L-Trp) pyrrole ring and converts L-tryptophan to N-formyl-L-kynurenine. Catalyzes the oxidative cleavage of the indole moiety. This Burkholderia cenocepacia (strain ATCC BAA-245 / DSM 16553 / LMG 16656 / NCTC 13227 / J2315 / CF5610) (Burkholderia cepacia (strain J2315)) protein is Tryptophan 2,3-dioxygenase.